A 648-amino-acid polypeptide reads, in one-letter code: Threonine--tRNA ligase (648 aa).

In terms of domain architecture, TGS spans 1-63 (MTEINIEFPD…NENVKIEIVT (63 aa)). The interval 243 to 541 (DHRVIGNNLD…LIEMYKGAFP (299 aa)) is catalytic. Residues cysteine 337, histidine 388, and histidine 518 each contribute to the Zn(2+) site.

Belongs to the class-II aminoacyl-tRNA synthetase family. As to quaternary structure, homodimer. Requires Zn(2+) as cofactor.

The protein resides in the cytoplasm. The enzyme catalyses tRNA(Thr) + L-threonine + ATP = L-threonyl-tRNA(Thr) + AMP + diphosphate + H(+). Its function is as follows. Catalyzes the attachment of threonine to tRNA(Thr) in a two-step reaction: L-threonine is first activated by ATP to form Thr-AMP and then transferred to the acceptor end of tRNA(Thr). Also edits incorrectly charged L-seryl-tRNA(Thr). In Pediococcus pentosaceus (strain ATCC 25745 / CCUG 21536 / LMG 10740 / 183-1w), this protein is Threonine--tRNA ligase.